The following is a 461-amino-acid chain: tRNA modification GTPase MnmE (461 aa).

(6S)-5-formyl-5,6,7,8-tetrahydrofolate is bound by residues K32, E89, and K128. The TrmE-type G domain maps to 224–387 (GHALSIVGKP…LGQKISAFFP (164 aa)). Residue N234 coordinates K(+). Residues 234-239 (NAGKSS), 253-259 (SDIKGTT), and 278-281 (DTAG) each bind GTP. Residue S238 participates in Mg(2+) binding. The K(+) site is built by S253, I255, and T258. Mg(2+) is bound at residue T259. Residue K461 coordinates (6S)-5-formyl-5,6,7,8-tetrahydrofolate.

This sequence belongs to the TRAFAC class TrmE-Era-EngA-EngB-Septin-like GTPase superfamily. TrmE GTPase family. In terms of assembly, homodimer. Heterotetramer of two MnmE and two MnmG subunits. K(+) serves as cofactor.

It localises to the cytoplasm. Its function is as follows. Exhibits a very high intrinsic GTPase hydrolysis rate. Involved in the addition of a carboxymethylaminomethyl (cmnm) group at the wobble position (U34) of certain tRNAs, forming tRNA-cmnm(5)s(2)U34. The sequence is that of tRNA modification GTPase MnmE from Helicobacter pylori (strain HPAG1).